Here is a 328-residue protein sequence, read N- to C-terminus: Malate dehydrogenase (328 aa).

12-18 (GAAGQIG) provides a ligand contact to NAD(+). The substrate site is built by arginine 92 and arginine 98. NAD(+) is bound by residues asparagine 105, glutamine 112, and 129–131 (TGN). Substrate contacts are provided by asparagine 131 and arginine 162. Histidine 187 (proton acceptor) is an active-site residue.

The protein belongs to the LDH/MDH superfamily. MDH type 2 family.

The catalysed reaction is (S)-malate + NAD(+) = oxaloacetate + NADH + H(+). Its function is as follows. Catalyzes the reversible oxidation of malate to oxaloacetate. The polypeptide is Malate dehydrogenase (Nocardioides sp. (strain ATCC BAA-499 / JS614)).